Consider the following 242-residue polypeptide: Ribonuclease PH (242 aa).

Residues Arg86 and 124-126 contribute to the phosphate site; that span reads GTR.

The protein belongs to the RNase PH family. As to quaternary structure, homohexameric ring arranged as a trimer of dimers.

It catalyses the reaction tRNA(n+1) + phosphate = tRNA(n) + a ribonucleoside 5'-diphosphate. Its function is as follows. Phosphorolytic 3'-5' exoribonuclease that plays an important role in tRNA 3'-end maturation. Removes nucleotide residues following the 3'-CCA terminus of tRNAs; can also add nucleotides to the ends of RNA molecules by using nucleoside diphosphates as substrates, but this may not be physiologically important. Probably plays a role in initiation of 16S rRNA degradation (leading to ribosome degradation) during starvation. This is Ribonuclease PH from Bacillus pumilus (strain SAFR-032).